Here is a 331-residue protein sequence, read N- to C-terminus: Tryptophan--tRNA ligase (331 aa).

Residues 10-12 (QPS) and 18-19 (GN) contribute to the ATP site. A 'HIGH' region motif is present at residues 11-19 (PSGQLTLGN). L-tryptophan is bound at residue Asp-133. Residues 145–147 (GED), Val-184, and 193–197 (KMSKS) each bind ATP. The 'KMSKS' region signature appears at 193 to 197 (KMSKS).

Belongs to the class-I aminoacyl-tRNA synthetase family. Homodimer.

It is found in the cytoplasm. It catalyses the reaction tRNA(Trp) + L-tryptophan + ATP = L-tryptophyl-tRNA(Trp) + AMP + diphosphate + H(+). Functionally, catalyzes the attachment of tryptophan to tRNA(Trp). This Listeria monocytogenes serotype 4b (strain F2365) protein is Tryptophan--tRNA ligase.